Consider the following 288-residue polypeptide: ATP phosphoribosyltransferase (288 aa).

Belongs to the ATP phosphoribosyltransferase family. Long subfamily. Requires Mg(2+) as cofactor.

The protein resides in the cytoplasm. It carries out the reaction 1-(5-phospho-beta-D-ribosyl)-ATP + diphosphate = 5-phospho-alpha-D-ribose 1-diphosphate + ATP. It participates in amino-acid biosynthesis; L-histidine biosynthesis; L-histidine from 5-phospho-alpha-D-ribose 1-diphosphate: step 1/9. With respect to regulation, feedback inhibited by histidine. Its function is as follows. Catalyzes the condensation of ATP and 5-phosphoribose 1-diphosphate to form N'-(5'-phosphoribosyl)-ATP (PR-ATP). Has a crucial role in the pathway because the rate of histidine biosynthesis seems to be controlled primarily by regulation of HisG enzymatic activity. In Methanococcus maripaludis (strain C5 / ATCC BAA-1333), this protein is ATP phosphoribosyltransferase.